A 134-amino-acid polypeptide reads, in one-letter code: MYRYPVEVIADTYLSKVGGYSYELDRNEIGINVKALEMNTSIIANETLATLKRFEEIRPYFLRRKFVVVGIEESMDCYEMSANGEVVLPEEMEGSMEVGESVIVNTVEAFRIDGDYSNIIKAIKWRLDNQILRN.

This is an uncharacterized protein from Archaeoglobus fulgidus (strain ATCC 49558 / DSM 4304 / JCM 9628 / NBRC 100126 / VC-16).